The sequence spans 285 residues: NAD kinase (285 aa).

The Proton acceptor role is filled by aspartate 76. Residues 76-77 (DG), 151-152 (NE), histidine 162, arginine 179, aspartate 181, 192-197 (TAYSLS), and glutamine 252 each bind NAD(+).

It belongs to the NAD kinase family. The cofactor is a divalent metal cation.

It localises to the cytoplasm. It carries out the reaction NAD(+) + ATP = ADP + NADP(+) + H(+). In terms of biological role, involved in the regulation of the intracellular balance of NAD and NADP, and is a key enzyme in the biosynthesis of NADP. Catalyzes specifically the phosphorylation on 2'-hydroxyl of the adenosine moiety of NAD to yield NADP. This Haemophilus influenzae (strain ATCC 51907 / DSM 11121 / KW20 / Rd) protein is NAD kinase.